We begin with the raw amino-acid sequence, 268 residues long: Ribosomal RNA small subunit methyltransferase A (268 aa).

S-adenosyl-L-methionine contacts are provided by asparagine 18, leucine 20, glycine 45, glutamate 66, aspartate 91, and asparagine 112.

Belongs to the class I-like SAM-binding methyltransferase superfamily. rRNA adenine N(6)-methyltransferase family. RsmA subfamily.

It localises to the cytoplasm. The enzyme catalyses adenosine(1518)/adenosine(1519) in 16S rRNA + 4 S-adenosyl-L-methionine = N(6)-dimethyladenosine(1518)/N(6)-dimethyladenosine(1519) in 16S rRNA + 4 S-adenosyl-L-homocysteine + 4 H(+). Specifically dimethylates two adjacent adenosines (A1518 and A1519) in the loop of a conserved hairpin near the 3'-end of 16S rRNA in the 30S particle. May play a critical role in biogenesis of 30S subunits. The polypeptide is Ribosomal RNA small subunit methyltransferase A (Shewanella baltica (strain OS185)).